We begin with the raw amino-acid sequence, 295 residues long: (R)-3-hydroxydecanoyl-ACP:CoA transacylase (295 aa).

The 227-residue stretch at 28–254 (NTIILINGSL…VIRDAGHFLD (227 aa)) folds into the AB hydrolase-1 domain.

Its pathway is polyester biosynthesis; polyhydroxyalkanoate biosynthesis. Catalyzes the transfer of the acyl moiety from in vitro synthesized 3-hydroxydecanoyl-CoA to acyl carrier protein. This chain is (R)-3-hydroxydecanoyl-ACP:CoA transacylase (phaG), found in Pseudomonas putida (strain ATCC 47054 / DSM 6125 / CFBP 8728 / NCIMB 11950 / KT2440).